The chain runs to 269 residues: GTP cyclohydrolase FolE2 2 (269 aa).

The protein belongs to the GTP cyclohydrolase IV family.

It catalyses the reaction GTP + H2O = 7,8-dihydroneopterin 3'-triphosphate + formate + H(+). It functions in the pathway cofactor biosynthesis; 7,8-dihydroneopterin triphosphate biosynthesis; 7,8-dihydroneopterin triphosphate from GTP: step 1/1. In terms of biological role, converts GTP to 7,8-dihydroneopterin triphosphate. The protein is GTP cyclohydrolase FolE2 2 of Burkholderia lata (strain ATCC 17760 / DSM 23089 / LMG 22485 / NCIMB 9086 / R18194 / 383).